The sequence spans 229 residues: Ribonuclease HII (229 aa).

Residues 34–225 (GPVAGVDEAG…VKAAHDQWLQ (192 aa)) enclose the RNase H type-2 domain. 3 residues coordinate a divalent metal cation: Asp40, Glu41, and Asp134.

It belongs to the RNase HII family. It depends on Mn(2+) as a cofactor. The cofactor is Mg(2+).

Its subcellular location is the cytoplasm. It carries out the reaction Endonucleolytic cleavage to 5'-phosphomonoester.. Functionally, endonuclease that specifically degrades the RNA of RNA-DNA hybrids. In Corynebacterium diphtheriae (strain ATCC 700971 / NCTC 13129 / Biotype gravis), this protein is Ribonuclease HII.